The sequence spans 460 residues: Muscarinic acetylcholine receptor M1 (460 aa).

The Extracellular portion of the chain corresponds to 1-22 (MNTSVPPAVSPNITVLAPGKGP). 2 N-linked (GlcNAc...) asparagine glycosylation sites follow: N2 and N12. Residues 23–48 (WQVAFIGITTGLLSLATVTGNLLVLI) form a helical membrane-spanning segment. Residues 49–62 (SFKVNTELKTVNNY) lie on the Cytoplasmic side of the membrane. Residues 63–84 (FLLSLACADLIIGTFSMNLYTT) traverse the membrane as a helical segment. The Extracellular portion of the chain corresponds to 85-95 (YLLMGHWALGT). The chain crosses the membrane as a helical span at residues 96 to 121 (LACDLWLALDYVASNASVMNLLLISF). C98 and C178 are oxidised to a cystine. Residues 122 to 142 (DRYFSVTRPLSYRAKRTPRRA) are Cytoplasmic-facing. A helical membrane pass occupies residues 143 to 164 (ALMIGLAWLVSFVLWAPAILFW). Residues 165 to 185 (QYLVGERTVLAGQCYIQFLSQ) are Extracellular-facing. A helical transmembrane segment spans residues 186-209 (PIITFGTAMAAFYLPVTVMCTLYW). Residues 210–366 (RIYRETENRA…LVKEKKAART (157 aa)) are Cytoplasmic-facing. Disordered regions lie at residues 225–257 (LQGS…SPPG), 274–297 (WKEE…EEPG), and 310–351 (EAQA…QLAK). T230 is modified (phosphothreonine). Positions 238–257 (SSSSERSQPGAEGSPESPPG) are enriched in low complexity. S254 bears the Phosphoserine mark. Positions 328–343 (RPTKKGRDRGGKGQKP) are enriched in basic residues. The chain crosses the membrane as a helical span at residues 367 to 390 (LSAILLAFILTWTPYNIMVLVSTF). Over 391-397 (CKDCVPE) the chain is Extracellular. The helical transmembrane segment at 398–420 (TLWELGYWLCYVNSTVNPMCYAL) threads the bilayer. Over 421–460 (CNKAFRDTFRLLLLCRWDKRRWRKIPKRPGSVHRTPSRQC) the chain is Cytoplasmic. Phosphoserine is present on S451. T455 carries the post-translational modification Phosphothreonine. Phosphoserine is present on S457.

It belongs to the G-protein coupled receptor 1 family. Muscarinic acetylcholine receptor subfamily. CHRM1 sub-subfamily. In terms of assembly, interacts with GPRASP2. Interacts with TMEM147.

The protein resides in the cell membrane. It localises to the postsynaptic cell membrane. The muscarinic acetylcholine receptor mediates various cellular responses, including inhibition of adenylate cyclase, breakdown of phosphoinositides and modulation of potassium channels through the action of G proteins. Primary transducing effect is Pi turnover. This chain is Muscarinic acetylcholine receptor M1 (Chrm1), found in Mus musculus (Mouse).